The primary structure comprises 276 residues: Large ribosomal subunit protein uL2 (276 aa).

A disordered region spans residues 224–254 (VMNPVDHPHGGGEGRTSGGRHPVTPWGVPTK).

The protein belongs to the universal ribosomal protein uL2 family. Part of the 50S ribosomal subunit. Forms a bridge to the 30S subunit in the 70S ribosome.

One of the primary rRNA binding proteins. Required for association of the 30S and 50S subunits to form the 70S ribosome, for tRNA binding and peptide bond formation. It has been suggested to have peptidyltransferase activity; this is somewhat controversial. Makes several contacts with the 16S rRNA in the 70S ribosome. The chain is Large ribosomal subunit protein uL2 from Gluconobacter oxydans (strain 621H) (Gluconobacter suboxydans).